The primary structure comprises 288 residues: 4-hydroxy-3-methylbut-2-enyl diphosphate reductase (288 aa).

Residue Cys-12 coordinates [4Fe-4S] cluster. (2E)-4-hydroxy-3-methylbut-2-enyl diphosphate-binding residues include His-42 and His-77. Dimethylallyl diphosphate-binding residues include His-42 and His-77. The isopentenyl diphosphate site is built by His-42 and His-77. A [4Fe-4S] cluster-binding site is contributed by Cys-99. His-127 is a binding site for (2E)-4-hydroxy-3-methylbut-2-enyl diphosphate. Dimethylallyl diphosphate is bound at residue His-127. An isopentenyl diphosphate-binding site is contributed by His-127. Catalysis depends on Glu-129, which acts as the Proton donor. Thr-165 lines the (2E)-4-hydroxy-3-methylbut-2-enyl diphosphate pocket. Position 193 (Cys-193) interacts with [4Fe-4S] cluster. (2E)-4-hydroxy-3-methylbut-2-enyl diphosphate is bound by residues Ser-221, Ser-222, Asn-223, and Ser-265. The dimethylallyl diphosphate site is built by Ser-221, Ser-222, Asn-223, and Ser-265. Residues Ser-221, Ser-222, Asn-223, and Ser-265 each contribute to the isopentenyl diphosphate site.

The protein belongs to the IspH family. It depends on [4Fe-4S] cluster as a cofactor.

The catalysed reaction is isopentenyl diphosphate + 2 oxidized [2Fe-2S]-[ferredoxin] + H2O = (2E)-4-hydroxy-3-methylbut-2-enyl diphosphate + 2 reduced [2Fe-2S]-[ferredoxin] + 2 H(+). It carries out the reaction dimethylallyl diphosphate + 2 oxidized [2Fe-2S]-[ferredoxin] + H2O = (2E)-4-hydroxy-3-methylbut-2-enyl diphosphate + 2 reduced [2Fe-2S]-[ferredoxin] + 2 H(+). Its pathway is isoprenoid biosynthesis; dimethylallyl diphosphate biosynthesis; dimethylallyl diphosphate from (2E)-4-hydroxy-3-methylbutenyl diphosphate: step 1/1. It functions in the pathway isoprenoid biosynthesis; isopentenyl diphosphate biosynthesis via DXP pathway; isopentenyl diphosphate from 1-deoxy-D-xylulose 5-phosphate: step 6/6. Functionally, catalyzes the conversion of 1-hydroxy-2-methyl-2-(E)-butenyl 4-diphosphate (HMBPP) into a mixture of isopentenyl diphosphate (IPP) and dimethylallyl diphosphate (DMAPP). Acts in the terminal step of the DOXP/MEP pathway for isoprenoid precursor biosynthesis. The polypeptide is 4-hydroxy-3-methylbut-2-enyl diphosphate reductase (Thermoanaerobacter pseudethanolicus (strain ATCC 33223 / 39E) (Clostridium thermohydrosulfuricum)).